A 75-amino-acid chain; its full sequence is Small, acid-soluble spore protein Tlp (75 aa).

It belongs to the Tlp family.

The protein localises to the spore core. The protein is Small, acid-soluble spore protein Tlp of Geobacillus thermodenitrificans (strain NG80-2).